Here is a 163-residue protein sequence, read N- to C-terminus: Large ribosomal subunit protein bL17 (163 aa).

Residues 127–163 (VAKKATRTRRSKKSAEAAAPAAVEAPATEEPKAESAE) form a disordered region. Positions 129–138 (KKATRTRRSK) are enriched in basic residues. Residues 142–154 (EAAAPAAVEAPAT) show a composition bias toward low complexity.

This sequence belongs to the bacterial ribosomal protein bL17 family. As to quaternary structure, part of the 50S ribosomal subunit. Contacts protein L32.

The chain is Large ribosomal subunit protein bL17 from Bacteroides thetaiotaomicron (strain ATCC 29148 / DSM 2079 / JCM 5827 / CCUG 10774 / NCTC 10582 / VPI-5482 / E50).